A 688-amino-acid polypeptide reads, in one-letter code: Zinc finger CCCH domain-containing protein 22 (688 aa).

Residues Ala-62–Val-123 are disordered. Residues Pro-101–Ser-117 show a composition bias toward low complexity. The C3H1-type zinc finger occupies Gly-233–Asp-260. Positions Arg-366 to Lys-442 constitute an RRM domain. Positions Thr-487 to Leu-522 form a coiled coil. Positions Leu-552–Gln-624 are disordered. Residues Thr-574–Ser-589 show a composition bias toward basic and acidic residues. The span at Ala-613–Gln-624 shows a compositional bias: polar residues.

The chain is Zinc finger CCCH domain-containing protein 22 from Oryza sativa subsp. japonica (Rice).